Reading from the N-terminus, the 1207-residue chain is Plasma membrane calcium-transporting ATPase 4 (1207 aa).

The Cytoplasmic portion of the chain corresponds to 1 to 100 (MTNPTEHTLP…KTFLELVWEA (100 aa)). Position 13 is a phosphoserine (S13). The chain crosses the membrane as a helical span at residues 101 to 121 (LQDVTLIILEIAAIISLVLSF). Residues 122–147 (YRPPGGENEQCGLAVTSPEDEGEAEA) are Extracellular-facing. The helical transmembrane segment at 148-168 (GWIEGAAILFSVIIVVLVTAF) threads the bilayer. Residues 169–368 (NDWSKEKQFR…LAVQIGKAGL (200 aa)) lie on the Cytoplasmic side of the membrane. Residues 294–317 (EEEKKKKGKKQGVPENRNKAKTQD) are disordered. A phosphoserine mark is found at S328 and S334. Residues 369-389 (IMSAITVLILILYFVIDNFVI) traverse the membrane as a helical segment. The Extracellular portion of the chain corresponds to 390-408 (QRRPWLAECTPIYVQYFVK). The helical transmembrane segment at 409–429 (FFIIGVTVLVVAVPEGLPLAV) threads the bilayer. The Cytoplasmic portion of the chain corresponds to 430–843 (TISLAYSVKK…RNVYDSISKF (414 aa)). Catalysis depends on D465, which acts as the 4-aspartylphosphate intermediate. Mg(2+) contacts are provided by D785 and D789. A helical membrane pass occupies residues 844-864 (LQFQLTVNVVAVIVAFTGACI). Over 865-871 (TQDSPLK) the chain is Extracellular. The chain crosses the membrane as a helical span at residues 872–892 (AVQMLWVNLIMDTFASLALAT). Topologically, residues 893 to 918 (EPPTDSLLKRRPYGRNKPLISRTMMK) are cytoplasmic. The helical transmembrane segment at 919–939 (NILGHAVYQLTVIFFLVFAGE) threads the bilayer. Residues 940-957 (KFFDIDSGRRAPLHSPPS) lie on the Extracellular side of the membrane. The helical transmembrane segment at 958–977 (QHYTIIFNTFVLMQLFNEIN) threads the bilayer. The Cytoplasmic segment spans residues 978-994 (SRKIHGERNVFSGIFRN). Residues 995–1015 (LIFCSVVLGTFISQIIIVEFG) traverse the membrane as a helical segment. Over 1016–1028 (GKPFSCTKLTLSQ) the chain is Extracellular. The helical transmembrane segment at 1029 to 1049 (WFWCLFIGIGELLWGQVISTI) threads the bilayer. The Cytoplasmic portion of the chain corresponds to 1050-1207 (PTQSLKFLKE…SPLHSLETSV (158 aa)). A calmodulin-binding subdomain A region spans residues 1086–1103 (LRRGQILWFRGLNRIQTQ). T1102 is subject to Phosphothreonine; by PKC. The segment at 1104–1113 (IKVVKAFHSS) is calmodulin-binding subdomain B. The segment at 1159–1181 (VSKPGTKTSSLDGEVTPQTNKNN) is disordered. The segment covering 1163-1181 (GTKTSSLDGEVTPQTNKNN) has biased composition (polar residues).

This sequence belongs to the cation transport ATPase (P-type) (TC 3.A.3) family. Type IIB subfamily. As to quaternary structure, interacts with PDZD11. Interacts with SLC35G1 and STIM1. Interacts with calmodulin. In terms of tissue distribution, isoform 1 is detected in brain, heart, liver, testis and epididymis. Isoform 2 is detected in brain (at protein level), heart, seminal vesicle and epididymis. There is a shift in expression from isoform 1 to isoform 2 along the length of the epididymis from caput to cauda (at protein level).

It localises to the cell membrane. Its subcellular location is the cell projection. The protein resides in the cilium. It is found in the flagellum membrane. It carries out the reaction Ca(2+)(in) + ATP + H2O = Ca(2+)(out) + ADP + phosphate + H(+). With respect to regulation, activated by calcium/calmodulin. Functionally, calcium/calmodulin-regulated and magnesium-dependent enzyme that catalyzes the hydrolysis of ATP coupled with the transport of calcium out of the cell. By regulating sperm cells calcium homeostasis, may play a role in sperm motility. This chain is Plasma membrane calcium-transporting ATPase 4, found in Bos taurus (Bovine).